The chain runs to 452 residues: Probable intron-encoded endonuclease 2 (452 aa).

The next 3 helical transmembrane spans lie at 1–21, 22–42, and 57–77; these read MNIT…NRKN, IILM…LILV, and IYII…LVAF. Residues 1–80 are ndh-4L exon 1 encoded; sequence MNITLILFLI…LAILVAFYRL (80 aa). The segment at 81–452 is ndh-4L intron 1 encoded; the sequence is INSPVKNPRS…SLEGGMNKNI (372 aa).

This sequence in the N-terminal section; belongs to the complex I subunit 4L family. The protein in the C-terminal section; belongs to the LAGLIDADG endonuclease family.

The protein resides in the mitochondrion membrane. Its function is as follows. Mitochondrial DNA endonuclease involved in intron homing. In Neurospora crassa (strain ATCC 24698 / 74-OR23-1A / CBS 708.71 / DSM 1257 / FGSC 987), this protein is Probable intron-encoded endonuclease 2.